Here is a 381-residue protein sequence, read N- to C-terminus: MERSLLPEPPLAMALLGPRFEAQTGGNRSVLDNVLPDMAPLVNPYWSRFAPMDPTMSKILGLFTLVILIISCCGNGVVVYIFGGTKSLRTPANLLVLNLAFSDFCMMASQSPVMIINFYYETWVLGPLWCDIYAACGSLFGCVSIWSMCMIAFDRYNVIVKGINGTPMTIKTSIMKIAFIWMMAVFWTIMPLIGWSSYVPEGNLTACSIDYMTRQWNPRSYLITYSLFVYYTPLFMICYSYWFIIATVAAHEKAMRDQAKKMNVKSLRSSEDCDKSAENKLAKVALTTISLWFMAWTPYLIICYFGLFKIDGLTPLTTIWGATFAKTSAVYNPIVYGISHPKYRLVLKEKCPMCVCGSTDEPKPDAPPSDTETTSEAESKA.

Residues 1 to 56 (MERSLLPEPPLAMALLGPRFEAQTGGNRSVLDNVLPDMAPLVNPYWSRFAPMDPTM) lie on the Extracellular side of the membrane. Asparagine 27 is a glycosylation site (N-linked (GlcNAc...) asparagine). The chain crosses the membrane as a helical span at residues 57–81 (SKILGLFTLVILIISCCGNGVVVYI). Over 82-93 (FGGTKSLRTPAN) the chain is Cytoplasmic. A helical transmembrane segment spans residues 94 to 119 (LLVLNLAFSDFCMMASQSPVMIINFY). At 120–133 (YETWVLGPLWCDIY) the chain is on the extracellular side. Cysteine 130 and cysteine 207 form a disulfide bridge. Residues 134–153 (AACGSLFGCVSIWSMCMIAF) form a helical membrane-spanning segment. Residues 154-172 (DRYNVIVKGINGTPMTIKT) are Cytoplasmic-facing. The chain crosses the membrane as a helical span at residues 173–196 (SIMKIAFIWMMAVFWTIMPLIGWS). Residues 197-220 (SYVPEGNLTACSIDYMTRQWNPRS) lie on the Extracellular side of the membrane. A helical membrane pass occupies residues 221 to 248 (YLITYSLFVYYTPLFMICYSYWFIIATV). The Cytoplasmic segment spans residues 249 to 283 (AAHEKAMRDQAKKMNVKSLRSSEDCDKSAENKLAK). Residues 284-307 (VALTTISLWFMAWTPYLIICYFGL) traverse the membrane as a helical segment. Residues 308-314 (FKIDGLT) lie on the Extracellular side of the membrane. A helical transmembrane segment spans residues 315 to 339 (PLTTIWGATFAKTSAVYNPIVYGIS). Lysine 326 is modified (N6-(retinylidene)lysine). The Cytoplasmic portion of the chain corresponds to 340–381 (HPKYRLVLKEKCPMCVCGSTDEPKPDAPPSDTETTSEAESKA). Residues 358–381 (STDEPKPDAPPSDTETTSEAESKA) form a disordered region. Over residues 370–381 (DTETTSEAESKA) the composition is skewed to polar residues.

This sequence belongs to the G-protein coupled receptor 1 family. Opsin subfamily. Some or all of the Ser/Thr residues present in the C-terminal part may be phosphorylated.

It is found in the membrane. In terms of biological role, visual pigments are the light-absorbing molecules that mediate vision. They consist of an apoprotein, opsin, covalently linked to cis-retinal. In Drosophila pseudoobscura pseudoobscura (Fruit fly), this protein is Opsin Rh2 (Rh2).